The following is a 407-amino-acid chain: MTYPNLLDHFLTYVKVNTRSDEHSTTTPSTQSQVDFATNVLIPEMKRVGLQNVYYLPNGFAIGTLPANDPSLTRKIGFISHMDTADFNAEGVNPQVIENYDGGVIELGNSGFKLDPADFKSLEKYPGQTLITTDGTTLLGADDKSGIAEIMTAIEYLTAHPEIKHCEIRVGFGPDEEIGVGANKFDAEDFDVDFAYTVDGGPLGELQYETFSAAGAELHFQGRNVHPGTAKGQMVNALQLAIDFHNQLPENDRPELTEGYQGFYHLMDVTGSVEETRASYIIRDFEKDAFEARKASMQSIADKMNEELGSDRVTLNLTDQYYNMKEVIEKDMTPITIAKAVMEDLGITPIIEPIRGGTDGSKISFMGIPTPNIFAGGENMHGRFEYVSLQTMERAVDTIIGIVAYKG.

H81 is a Zn(2+) binding site. The active site involves D83. A Zn(2+)-binding site is contributed by D142. The active-site Proton acceptor is E176. E177, D199, and H381 together coordinate Zn(2+).

Belongs to the peptidase M20B family. It depends on Zn(2+) as a cofactor.

The protein localises to the cytoplasm. The catalysed reaction is Release of the N-terminal residue from a tripeptide.. Functionally, cleaves the N-terminal amino acid of tripeptides. The polypeptide is Peptidase T (Streptococcus pneumoniae (strain Taiwan19F-14)).